A 136-amino-acid chain; its full sequence is Small ribosomal subunit protein uS9 (136 aa).

It belongs to the universal ribosomal protein uS9 family.

The polypeptide is Small ribosomal subunit protein uS9 (Borrelia duttonii (strain Ly)).